Here is a 174-residue protein sequence, read N- to C-terminus: Chorismate pyruvate-lyase (174 aa).

Substrate contacts are provided by Met-36, Arg-78, Leu-116, and Glu-157.

It belongs to the UbiC family. In terms of assembly, monomer.

It localises to the cytoplasm. It carries out the reaction chorismate = 4-hydroxybenzoate + pyruvate. Its pathway is cofactor biosynthesis; ubiquinone biosynthesis. Removes the pyruvyl group from chorismate, with concomitant aromatization of the ring, to provide 4-hydroxybenzoate (4HB) for the ubiquinone pathway. This is Chorismate pyruvate-lyase from Yersinia pestis bv. Antiqua (strain Angola).